A 216-amino-acid polypeptide reads, in one-letter code: Large ribosomal subunit protein uL3 (216 aa).

Residues 134-153 form a disordered region; it reads RATHGNSRSHNVPGSIGMAQ. N5-methylglutamine is present on Gln-153.

The protein belongs to the universal ribosomal protein uL3 family. In terms of assembly, part of the 50S ribosomal subunit. Forms a cluster with proteins L14 and L19. In terms of processing, methylated by PrmB.

One of the primary rRNA binding proteins, it binds directly near the 3'-end of the 23S rRNA, where it nucleates assembly of the 50S subunit. The chain is Large ribosomal subunit protein uL3 from Cupriavidus pinatubonensis (strain JMP 134 / LMG 1197) (Cupriavidus necator (strain JMP 134)).